The sequence spans 45 residues: Photosystem II reaction center protein K (45 aa).

A propeptide spanning residues 1 to 8 (MEAVLLLA) is cleaved from the precursor. The helical transmembrane segment at 24-44 (MPVIPLFFLALAFVWQAAVGF) threads the bilayer.

The protein belongs to the PsbK family. PSII is composed of 1 copy each of membrane proteins PsbA, PsbB, PsbC, PsbD, PsbE, PsbF, PsbH, PsbI, PsbJ, PsbK, PsbL, PsbM, PsbT, PsbX, PsbY, PsbZ, Psb30/Ycf12, peripheral proteins PsbO, CyanoQ (PsbQ), PsbU, PsbV and a large number of cofactors. It forms dimeric complexes.

The protein localises to the cellular thylakoid membrane. Functionally, one of the components of the core complex of photosystem II (PSII). PSII is a light-driven water:plastoquinone oxidoreductase that uses light energy to abstract electrons from H(2)O, generating O(2) and a proton gradient subsequently used for ATP formation. It consists of a core antenna complex that captures photons, and an electron transfer chain that converts photonic excitation into a charge separation. The sequence is that of Photosystem II reaction center protein K from Acaryochloris marina (strain MBIC 11017).